A 60-amino-acid chain; its full sequence is Large ribosomal subunit protein bL32 (60 aa).

Basic residues predominate over residues 1–19 (MAVPKRRTSKRRKRARNTH). The tract at residues 1 to 20 (MAVPKRRTSKRRKRARNTHK) is disordered.

It belongs to the bacterial ribosomal protein bL32 family.

This is Large ribosomal subunit protein bL32 from Gemmatimonas aurantiaca (strain DSM 14586 / JCM 11422 / NBRC 100505 / T-27).